Consider the following 267-residue polypeptide: Cell division protein FtsQ (267 aa).

The Cytoplasmic portion of the chain corresponds to 1–32 (MRKKTSSNKKNTAKKNNNISLHRKLGLIYKKT). A helical membrane pass occupies residues 33-53 (ILILKIVLIIFICLFAFTKYF). Over 54 to 267 (ASLKSYLKTN…DKNKYYIEKY (214 aa)) the chain is Periplasmic. Residues 73–141 (FKLENVIIEG…STIYIKLFER (69 aa)) enclose the POTRA domain.

This sequence belongs to the FtsQ/DivIB family. FtsQ subfamily.

Its subcellular location is the cell inner membrane. In terms of biological role, essential cell division protein. The protein is Cell division protein FtsQ of Rickettsia bellii (strain RML369-C).